The following is a 377-amino-acid chain: Alanine racemase (377 aa).

The Proton acceptor; specific for D-alanine role is filled by Lys33. The residue at position 33 (Lys33) is an N6-(pyridoxal phosphate)lysine. Arg134 provides a ligand contact to substrate. Tyr267 functions as the Proton acceptor; specific for L-alanine in the catalytic mechanism. Met315 provides a ligand contact to substrate.

Belongs to the alanine racemase family. Pyridoxal 5'-phosphate serves as cofactor.

The enzyme catalyses L-alanine = D-alanine. It functions in the pathway amino-acid biosynthesis; D-alanine biosynthesis; D-alanine from L-alanine: step 1/1. Catalyzes the interconversion of L-alanine and D-alanine. May also act on other amino acids. This chain is Alanine racemase (alr), found in Treponema pallidum subsp. pallidum (strain SS14).